A 390-amino-acid chain; its full sequence is Dual-specificity RNA methyltransferase RlmN (390 aa).

Glutamate 111 acts as the Proton acceptor in catalysis. In terms of domain architecture, Radical SAM core spans 117 to 356; the sequence is EDDRATLCVS…VIVRKTRGDD (240 aa). A disulfide bridge connects residues cysteine 124 and cysteine 361. [4Fe-4S] cluster contacts are provided by cysteine 131, cysteine 135, and cysteine 138. S-adenosyl-L-methionine contacts are provided by residues 185–186, serine 217, 239–241, and asparagine 318; these read GE and SLH. Catalysis depends on cysteine 361, which acts as the S-methylcysteine intermediate.

This sequence belongs to the radical SAM superfamily. RlmN family. [4Fe-4S] cluster is required as a cofactor.

It localises to the cytoplasm. It carries out the reaction adenosine(2503) in 23S rRNA + 2 reduced [2Fe-2S]-[ferredoxin] + 2 S-adenosyl-L-methionine = 2-methyladenosine(2503) in 23S rRNA + 5'-deoxyadenosine + L-methionine + 2 oxidized [2Fe-2S]-[ferredoxin] + S-adenosyl-L-homocysteine. The catalysed reaction is adenosine(37) in tRNA + 2 reduced [2Fe-2S]-[ferredoxin] + 2 S-adenosyl-L-methionine = 2-methyladenosine(37) in tRNA + 5'-deoxyadenosine + L-methionine + 2 oxidized [2Fe-2S]-[ferredoxin] + S-adenosyl-L-homocysteine. Specifically methylates position 2 of adenine 2503 in 23S rRNA and position 2 of adenine 37 in tRNAs. m2A2503 modification seems to play a crucial role in the proofreading step occurring at the peptidyl transferase center and thus would serve to optimize ribosomal fidelity. This chain is Dual-specificity RNA methyltransferase RlmN, found in Edwardsiella ictaluri (strain 93-146).